We begin with the raw amino-acid sequence, 113 residues long: Kita-kyushu lung cancer antigen 1 (113 aa).

Topologically, residues 1-3 (MNF) are cytoplasmic. A helical; Signal-anchor for type II membrane protein membrane pass occupies residues 4–21 (YLLLASSILCALIVFWKY). The Extracellular portion of the chain corresponds to 22 to 113 (RRFQRNTGEM…RGASPHRKST (92 aa)). N-linked (GlcNAc...) asparagine glycosylation occurs at asparagine 83.

As to expression, specifically expressed in testis. Expressed by cancer cell lines.

It is found in the cell membrane. This chain is Kita-kyushu lung cancer antigen 1 (CT83), found in Homo sapiens (Human).